The chain runs to 237 residues: Lipoprotein-releasing system ATP-binding protein LolD (237 aa).

The ABC transporter domain maps to 8-236 (ISVTDLRKTF…EAIKKSVKTA (229 aa)). 40–47 (GKSGSGKS) contacts ATP.

The protein belongs to the ABC transporter superfamily. Lipoprotein translocase (TC 3.A.1.125) family. In terms of assembly, the complex is composed of two ATP-binding proteins (LolD) and two transmembrane proteins (LolC and LolE).

The protein localises to the cell inner membrane. Functionally, part of the ABC transporter complex LolCDE involved in the translocation of mature outer membrane-directed lipoproteins, from the inner membrane to the periplasmic chaperone, LolA. Responsible for the formation of the LolA-lipoprotein complex in an ATP-dependent manner. The chain is Lipoprotein-releasing system ATP-binding protein LolD from Leptospira interrogans serogroup Icterohaemorrhagiae serovar Lai (strain 56601).